The following is a 487-amino-acid chain: Probable Xaa-Pro aminopeptidase MGYG_06974 (487 aa).

4 residues coordinate Mn(2+): D255, D266, E414, and E458.

The protein belongs to the peptidase M24B family. It depends on Mn(2+) as a cofactor.

It carries out the reaction Release of any N-terminal amino acid, including proline, that is linked to proline, even from a dipeptide or tripeptide.. Functionally, catalyzes the removal of a penultimate prolyl residue from the N-termini of peptides. This chain is Probable Xaa-Pro aminopeptidase MGYG_06974, found in Arthroderma gypseum (strain ATCC MYA-4604 / CBS 118893) (Microsporum gypseum).